We begin with the raw amino-acid sequence, 362 residues long: RING-H2 finger protein ATL52 (362 aa).

A helical transmembrane segment spans residues 58-78; it reads LIALIGILTSALILVSYYTLI. An RING-type; atypical zinc finger spans residues 142–184; the sequence is CSVCLSEFEENESLRLLPKCNHAFHLPCIDTWLKSHSNCPLCR. Disordered stretches follow at residues 252 to 271 and 296 to 333; these read DARSELQLPEERRETKDEDS and EDEEGESGGVGTSQRREEGEDGDGKTIPPTEANQRSGG. Basic and acidic residues predominate over residues 309–319; that stretch reads QRREEGEDGDG.

Belongs to the RING-type zinc finger family. ATL subfamily. In terms of tissue distribution, expressed in flowers.

The protein localises to the membrane. The catalysed reaction is S-ubiquitinyl-[E2 ubiquitin-conjugating enzyme]-L-cysteine + [acceptor protein]-L-lysine = [E2 ubiquitin-conjugating enzyme]-L-cysteine + N(6)-ubiquitinyl-[acceptor protein]-L-lysine.. Its pathway is protein modification; protein ubiquitination. The sequence is that of RING-H2 finger protein ATL52 (ATL52) from Arabidopsis thaliana (Mouse-ear cress).